A 362-amino-acid chain; its full sequence is Probable dual-specificity RNA methyltransferase RlmN (362 aa).

Glu99 acts as the Proton acceptor in catalysis. In terms of domain architecture, Radical SAM core spans 105–341 (SPDRHTVCVS…VTVRKSQGAS (237 aa)). Cys112 and Cys346 are oxidised to a cystine. [4Fe-4S] cluster contacts are provided by Cys119, Cys123, and Cys126. Residues 171-172 (GE), Ser204, 227-229 (SLH), and Asn303 each bind S-adenosyl-L-methionine. Cys346 acts as the S-methylcysteine intermediate in catalysis.

This sequence belongs to the radical SAM superfamily. RlmN family. [4Fe-4S] cluster serves as cofactor.

The protein localises to the cytoplasm. It carries out the reaction adenosine(2503) in 23S rRNA + 2 reduced [2Fe-2S]-[ferredoxin] + 2 S-adenosyl-L-methionine = 2-methyladenosine(2503) in 23S rRNA + 5'-deoxyadenosine + L-methionine + 2 oxidized [2Fe-2S]-[ferredoxin] + S-adenosyl-L-homocysteine. It catalyses the reaction adenosine(37) in tRNA + 2 reduced [2Fe-2S]-[ferredoxin] + 2 S-adenosyl-L-methionine = 2-methyladenosine(37) in tRNA + 5'-deoxyadenosine + L-methionine + 2 oxidized [2Fe-2S]-[ferredoxin] + S-adenosyl-L-homocysteine. Functionally, specifically methylates position 2 of adenine 2503 in 23S rRNA and position 2 of adenine 37 in tRNAs. This Chlorobium phaeobacteroides (strain BS1) protein is Probable dual-specificity RNA methyltransferase RlmN.